Reading from the N-terminus, the 764-residue chain is 1,4-alpha-glucan branching enzyme GlgB (764 aa).

The active-site Nucleophile is Asp434. Glu487 (proton donor) is an active-site residue.

This sequence belongs to the glycosyl hydrolase 13 family. GlgB subfamily. As to quaternary structure, monomer.

It carries out the reaction Transfers a segment of a (1-&gt;4)-alpha-D-glucan chain to a primary hydroxy group in a similar glucan chain.. The protein operates within glycan biosynthesis; glycogen biosynthesis. Functionally, catalyzes the formation of the alpha-1,6-glucosidic linkages in glycogen by scission of a 1,4-alpha-linked oligosaccharide from growing alpha-1,4-glucan chains and the subsequent attachment of the oligosaccharide to the alpha-1,6 position. In Nostoc sp. (strain PCC 7120 / SAG 25.82 / UTEX 2576), this protein is 1,4-alpha-glucan branching enzyme GlgB.